We begin with the raw amino-acid sequence, 270 residues long: Cyclic pyranopterin monophosphate synthase, mitochondrial (270 aa).

Residues 1-32 (MISTLRRAVFLRRFPAVVSPIKRAFSSRIDDE) constitute a mitochondrion transit peptide. Substrate-binding positions include 187 to 189 (LCH) and 225 to 226 (ME). Aspartate 240 is an active-site residue.

It belongs to the MoaC family. As to quaternary structure, homohexamer. Abundantly expressed in the roots.

Its subcellular location is the mitochondrion matrix. The enzyme catalyses (8S)-3',8-cyclo-7,8-dihydroguanosine 5'-triphosphate = cyclic pyranopterin phosphate + diphosphate. It participates in cofactor biosynthesis; molybdopterin biosynthesis. Catalyzes the conversion of (8S)-3',8-cyclo-7,8-dihydroguanosine 5'-triphosphate to cyclic pyranopterin monophosphate (cPMP). This is Cyclic pyranopterin monophosphate synthase, mitochondrial (CNX3) from Arabidopsis thaliana (Mouse-ear cress).